Here is a 204-residue protein sequence, read N- to C-terminus: GTP cyclohydrolase-2 (204 aa).

Arg49 to Glu53 provides a ligand contact to GTP. Positions 54, 65, and 67 each coordinate Zn(2+). Residues Gln70, Glu92 to Arg94, and Thr114 each bind GTP. Asp126 functions as the Proton acceptor in the catalytic mechanism. The active-site Nucleophile is Arg128. GTP contacts are provided by Thr149 and Lys154.

It belongs to the GTP cyclohydrolase II family. It depends on Zn(2+) as a cofactor.

It carries out the reaction GTP + 4 H2O = 2,5-diamino-6-hydroxy-4-(5-phosphoribosylamino)-pyrimidine + formate + 2 phosphate + 3 H(+). Its pathway is cofactor biosynthesis; riboflavin biosynthesis; 5-amino-6-(D-ribitylamino)uracil from GTP: step 1/4. Functionally, catalyzes the conversion of GTP to 2,5-diamino-6-ribosylamino-4(3H)-pyrimidinone 5'-phosphate (DARP), formate and pyrophosphate. In Shewanella baltica (strain OS155 / ATCC BAA-1091), this protein is GTP cyclohydrolase-2.